Here is a 906-residue protein sequence, read N- to C-terminus: Ankyrin repeat and MYND domain-containing protein 1 (906 aa).

3 MORN repeats span residues 16–38 (YHGQ…DGSS), 39–59 (FTGT…TKTM), and 61–83 (FQGL…DGSQ). The ANK 1 repeat unit spans residues 282 to 311 (KGYTVLAAAAMHSHLDIVNLLLDFGADVNK). A compositionally biased stretch (polar residues) spans 391-400 (SMQTPESSNM). The disordered stretch occupies residues 391 to 411 (SMQTPESSNMLHKEEVSPVKT). ANK repeat units follow at residues 479-508 (VRKM…DPNL), 511-540 (VPMQ…QTDI), 547-579 (QSLT…NVDA), 623-657 (GGRT…NPNV), 660-689 (SGHS…DPNL), and 701-732 (VVCD…DVLN). Residues Cys-845, Cys-848, Cys-859, Cys-862, Cys-868, Cys-872, His-881, and Cys-885 each coordinate Zn(2+). The segment at 845–885 (CYQCGRSIGVRLSPCPRCYGILTCSKYCKTKAWIEFHKKDC) adopts an MYND-type zinc-finger fold.

This Mus musculus (Mouse) protein is Ankyrin repeat and MYND domain-containing protein 1 (Ankmy1).